The primary structure comprises 150 residues: Cytochrome c oxidase subunit 5A, mitochondrial (150 aa).

The N-terminal 41 residues, 1 to 41, are a transit peptide targeting the mitochondrion; the sequence is MLGTALRRCAVAAASRAGPRGLQHPAPVPGPTAAIQSIRCY. The short motif at 2–17 is the SIFI-degron element; sequence LGTALRRCAVAAASRA. N6-acetyllysine is present on residues Lys87 and Lys113. Thr141 carries the post-translational modification Phosphothreonine.

Belongs to the cytochrome c oxidase subunit 5A family. Component of the cytochrome c oxidase (complex IV, CIV), a multisubunit enzyme composed of 14 subunits. The complex is composed of a catalytic core of 3 subunits MT-CO1, MT-CO2 and MT-CO3, encoded in the mitochondrial DNA, and 11 supernumerary subunits COX4I, COX5A, COX5B, COX6A, COX6B, COX6C, COX7A, COX7B, COX7C, COX8 and NDUFA4, which are encoded in the nuclear genome. The complex exists as a monomer or a dimer and forms supercomplexes (SCs) in the inner mitochondrial membrane with NADH-ubiquinone oxidoreductase (complex I, CI) and ubiquinol-cytochrome c oxidoreductase (cytochrome b-c1 complex, complex III, CIII), resulting in different assemblies (supercomplex SCI(1)III(2)IV(1) and megacomplex MCI(2)III(2)IV(2)). Interacts with AFG1L. Interacts with RAB5IF. Post-translationally, in response to mitochondrial stress, the precursor protein is ubiquitinated by the SIFI complex in the cytoplasm before mitochondrial import, leading to its degradation. Within the SIFI complex, UBR4 initiates ubiquitin chain that are further elongated or branched by KCMF1.

The protein localises to the mitochondrion inner membrane. It functions in the pathway energy metabolism; oxidative phosphorylation. Its function is as follows. Component of the cytochrome c oxidase, the last enzyme in the mitochondrial electron transport chain which drives oxidative phosphorylation. The respiratory chain contains 3 multisubunit complexes succinate dehydrogenase (complex II, CII), ubiquinol-cytochrome c oxidoreductase (cytochrome b-c1 complex, complex III, CIII) and cytochrome c oxidase (complex IV, CIV), that cooperate to transfer electrons derived from NADH and succinate to molecular oxygen, creating an electrochemical gradient over the inner membrane that drives transmembrane transport and the ATP synthase. Cytochrome c oxidase is the component of the respiratory chain that catalyzes the reduction of oxygen to water. Electrons originating from reduced cytochrome c in the intermembrane space (IMS) are transferred via the dinuclear copper A center (CU(A)) of subunit 2 and heme A of subunit 1 to the active site in subunit 1, a binuclear center (BNC) formed by heme A3 and copper B (CU(B)). The BNC reduces molecular oxygen to 2 water molecules using 4 electrons from cytochrome c in the IMS and 4 protons from the mitochondrial matrix. This chain is Cytochrome c oxidase subunit 5A, mitochondrial (COX5A), found in Nycticebus coucang (Slow loris).